A 449-amino-acid chain; its full sequence is Tubulin alpha chain (449 aa).

Residues Q11, E71, S140, G144, T145, T179, N206, and N228 each contribute to the GTP site. Residue E71 coordinates Mg(2+). E254 is an active-site residue.

This sequence belongs to the tubulin family. Dimer of alpha and beta chains. A typical microtubule is a hollow water-filled tube with an outer diameter of 25 nm and an inner diameter of 15 nM. Alpha-beta heterodimers associate head-to-tail to form protofilaments running lengthwise along the microtubule wall with the beta-tubulin subunit facing the microtubule plus end conferring a structural polarity. Microtubules usually have 13 protofilaments but different protofilament numbers can be found in some organisms and specialized cells. Mg(2+) is required as a cofactor.

The protein localises to the cytoplasm. It localises to the cytoskeleton. The catalysed reaction is GTP + H2O = GDP + phosphate + H(+). In terms of biological role, tubulin is the major constituent of microtubules, a cylinder consisting of laterally associated linear protofilaments composed of alpha- and beta-tubulin heterodimers. Microtubules grow by the addition of GTP-tubulin dimers to the microtubule end, where a stabilizing cap forms. Below the cap, tubulin dimers are in GDP-bound state, owing to GTPase activity of alpha-tubulin. The polypeptide is Tubulin alpha chain (TUB1) (Pneumocystis carinii).